A 248-amino-acid polypeptide reads, in one-letter code: Phosphomannomutase (248 aa).

Asp-14 functions as the Nucleophile in the catalytic mechanism. Mg(2+) contacts are provided by Asp-14 and Asp-16. The active-site Proton donor/acceptor is the Asp-16. Alpha-D-mannose 1-phosphate-binding residues include Arg-23, Arg-125, Arg-136, Arg-143, Ser-181, and Asp-183. Positions 209, 221, and 226 each coordinate Mg(2+).

It belongs to the eukaryotic PMM family. As to quaternary structure, homodimer. Mg(2+) serves as cofactor.

The protein localises to the cytoplasm. It carries out the reaction alpha-D-mannose 1-phosphate = D-mannose 6-phosphate. It participates in nucleotide-sugar biosynthesis; GDP-alpha-D-mannose biosynthesis; alpha-D-mannose 1-phosphate from D-fructose 6-phosphate: step 2/2. Its function is as follows. Catalyzes the interconversion of mannose-6-phosphate to mannose-1-phosphate, the precursor for the synthesis of GDP-mannose. GDP-mannose is an essential sugar nucleotide for the synthesis of D-mannose-containing cell wall polysaccharides (galactomannans and glucomannans), glycolipids, glycoproteins and the antioxidant L-ascorbate. The protein is Phosphomannomutase of Oryza sativa subsp. indica (Rice).